The primary structure comprises 138 residues: Small ribosomal subunit protein uS11c (138 aa).

The tract at residues methionine 1–glycine 22 is disordered. A compositionally biased stretch (basic residues) spans glycine 9–glycine 22.

This sequence belongs to the universal ribosomal protein uS11 family. Part of the 30S ribosomal subunit.

The protein localises to the plastid. The protein resides in the chloroplast. This is Small ribosomal subunit protein uS11c from Piper cenocladum (Ant piper).